A 399-amino-acid chain; its full sequence is Cytochrome P450 FAS1 (399 aa).

Cys349 serves as a coordination point for heme.

Belongs to the cytochrome P450 family. The cofactor is heme.

It localises to the cytoplasm. Functionally, may be involved in the biosynthesis of cytokinin phytohormones and in host plant fasciation (leafy gall). In Rhodococcoides fascians (Rhodococcus fascians), this protein is Cytochrome P450 FAS1 (fas1).